We begin with the raw amino-acid sequence, 292 residues long: Aquaporin-3 (292 aa).

Residues 1–24 lie on the Cytoplasmic side of the membrane; sequence MGRQKELMNRCGEMLHIRYRLLRQ. A helical transmembrane segment spans residues 25-42; that stretch reads ALAECLGTLILVMFGCGS. The Extracellular segment spans residues 43-56; the sequence is VAQVVLSRGTHGGF. The helical transmembrane segment at 57 to 74 threads the bilayer; that stretch reads LTINLAFGFAVTLAILVA. Residues 75–78 are Cytoplasmic-facing; it reads GQVS. An intramembrane region (discontinuously helical) is located at residues 79 to 92; it reads GAHLNPAVTFAMCF. Residues 83 to 85 carry the NPA 1 motif; sequence NPA. At 93-100 the chain is on the cytoplasmic side; it reads LAREPWIK. The helical transmembrane segment at 101–121 threads the bilayer; it reads LPIYTLAQTLGAFLGAGIVFG. Over 122-159 the chain is Extracellular; sequence LYYDAIWAFAGNELVVSGPNGTAGIFATYPSGHLDMVN. Asn141 is a glycosylation site (N-linked (GlcNAc...) asparagine). Residues 160-177 form a helical membrane-spanning segment; it reads GFFDQFIGTAALIVCVLA. The Cytoplasmic segment spans residues 178–189; sequence IVDPYNNPVPRG. Residues 190 to 206 form a helical membrane-spanning segment; it reads LEAFTVGLVVLVIGTSM. Residues 207–210 lie on the Extracellular side of the membrane; sequence GFNS. An intramembrane region (discontinuously helical) is located at residues 211–224; the sequence is GYAVNPARDFGPRL. The short motif at 215 to 217 is the NPA 2 element; it reads NPA. The Extracellular segment spans residues 225–242; the sequence is FTALAGWGSEVFTTGQNW. The chain crosses the membrane as a helical span at residues 243 to 264; the sequence is WWVPIVSPLLGSIGGVFVYQLM. The Cytoplasmic portion of the chain corresponds to 265 to 292; the sequence is IGCHLEQPPPSTEAENVKLAHMKHKEQI.

It belongs to the MIP/aquaporin (TC 1.A.8) family. Homotetramer; each monomer provides an independent glycerol/water pore. Could also exist in other oligomeric states. Detected in kidney medulla and papilla, in collecting duct cells. Detected in colon.

The protein localises to the cell membrane. It localises to the basolateral cell membrane. It catalyses the reaction glycerol(in) = glycerol(out). The catalysed reaction is H2O(in) = H2O(out). The enzyme catalyses urea(in) = urea(out). It carries out the reaction H2O2(out) = H2O2(in). Channel activity is inhibited by mercury ions. Its function is as follows. Aquaglyceroporins form homotetrameric transmembrane channels, with each monomer independently mediating glycerol and water transport across the plasma membrane along their osmotic gradient. Could also be permeable to urea. Also participates in cell permeability to H2O2 and H2O2-mediated signaling. In skin, transports glycerol to the epidermis and stratum corneum, where it maintains hydration, elasticity, and supports lipid biosynthesis for barrier repair. In kidney, contributes to the reabsorption of water, helping the body maintain proper fluid balance. The polypeptide is Aquaporin-3 (Rattus norvegicus (Rat)).